Reading from the N-terminus, the 115-residue chain is NADH-ubiquinone oxidoreductase chain 3 (115 aa).

3 helical membrane-spanning segments follow: residues Leu-3 to Trp-23, Phe-55 to Leu-75, and Leu-86 to Trp-106.

Belongs to the complex I subunit 3 family. In terms of assembly, core subunit of respiratory chain NADH dehydrogenase (Complex I) which is composed of 45 different subunits. Interacts with TMEM186. Interacts with TMEM242.

The protein localises to the mitochondrion inner membrane. The catalysed reaction is a ubiquinone + NADH + 5 H(+)(in) = a ubiquinol + NAD(+) + 4 H(+)(out). Its function is as follows. Core subunit of the mitochondrial membrane respiratory chain NADH dehydrogenase (Complex I) which catalyzes electron transfer from NADH through the respiratory chain, using ubiquinone as an electron acceptor. Essential for the catalytic activity of complex I. The protein is NADH-ubiquinone oxidoreductase chain 3 of Loxodonta africana (African elephant).